A 713-amino-acid chain; its full sequence is Calpain-1 catalytic subunit (713 aa).

One can recognise a Calpain catalytic domain in the interval 55–354 (LFQDEAFPPV…FTKLEICNLT (300 aa)). The Ca(2+) site is built by glutamine 109 and aspartate 114. Residues cysteine 115, histidine 272, and asparagine 296 contribute to the active site. 2 residues coordinate Ca(2+): aspartate 318 and glutamate 323. Threonine 354 is modified (phosphothreonine). The interval 355–525 (PDALKSRTLR…KKAGTQELDD (171 aa)) is domain III. Residues 526–541 (QIQANLPDEKVLSEEE) are linker. 4 consecutive EF-hand domains span residues 540-575 (EEID…IISK), 584-617 (FSLE…NRIR), 614-649 (NRIR…AGFK), and 679-713 (VRLE…TMFA). The segment at 542–712 (IDDNFKTLFS…LFKWLQLTMF (171 aa)) is domain IV. Ca(2+) contacts are provided by aspartate 597, aspartate 599, asparagine 601, lysine 603, glutamate 608, aspartate 627, aspartate 629, serine 631, serine 633, and glutamate 638.

The protein belongs to the peptidase C2 family. Forms a heterodimer with a small (regulatory) subunit CAPNS1. The cofactor is Ca(2+). In terms of processing, undergoes calcium-induced successive autoproteolytic cleavages that generate a membrane-bound 78 kDa active form and an intracellular 75 kDa active form. Calpastatin reduces with high efficiency the transition from 78 kDa to 75 kDa calpain forms.

Its subcellular location is the cytoplasm. The protein resides in the cell membrane. The enzyme catalyses Broad endopeptidase specificity.. With respect to regulation, activated by micromolar concentrations of calcium and inhibited by calpastatin. Its function is as follows. Calcium-regulated non-lysosomal thiol-protease which catalyzes limited proteolysis of substrates involved in cytoskeletal remodeling and signal transduction. Proteolytically cleaves CTBP1 at 'Asn-375', 'Gly-388' and 'His-410'. Cleaves and activates caspase-7 (CASP7). In Mus musculus (Mouse), this protein is Calpain-1 catalytic subunit.